The sequence spans 298 residues: D-alanine--D-alanine ligase (298 aa).

Positions 97–290 constitute an ATP-grasp domain; that stretch reads FYSLFKNYIQ…FDELINIIIK (194 aa). 124–173 contributes to the ATP binding site; it reads PFIIKPRKSGSSKGVYIIHNENEYKFYLEKDLKEFQEVLVQEYIKGREIT. Positions 245, 257, and 259 each coordinate Mg(2+).

This sequence belongs to the D-alanine--D-alanine ligase family. Mg(2+) is required as a cofactor. Mn(2+) serves as cofactor.

The protein resides in the cytoplasm. The catalysed reaction is 2 D-alanine + ATP = D-alanyl-D-alanine + ADP + phosphate + H(+). The protein operates within cell wall biogenesis; peptidoglycan biosynthesis. Functionally, cell wall formation. The protein is D-alanine--D-alanine ligase of Petrotoga mobilis (strain DSM 10674 / SJ95).